A 228-amino-acid chain; its full sequence is Ribonuclease S-1 (228 aa).

An N-terminal signal peptide occupies residues 1–27 (MGVTGMTYMFTMVFSLIVLILSSSTVG). Residue glutamine 36 participates in RNA binding. Cysteine 42 and cysteine 49 are disulfide-bonded. Histidine 60 contacts RNA. Histidine 60 (proton donor) is an active-site residue. A disulfide bridge links cysteine 75 with cysteine 119. The N-linked (GlcNAc...) asparagine glycan is linked to asparagine 87. 98–99 (NV) contributes to the RNA binding site. Asparagine 101 is a glycosylation site (N-linked (GlcNAc...) asparagine). RNA contacts are provided by residues phenylalanine 108, 111–112 (KE), and 115–116 (KH). Glutamate 112 is a catalytic residue. The Proton acceptor role is filled by histidine 116. Residues asparagine 144, asparagine 157, and asparagine 175 are each glycosylated (N-linked (GlcNAc...) asparagine). 2 cysteine pairs are disulfide-bonded: cysteine 183/cysteine 222 and cysteine 199/cysteine 210.

Belongs to the RNase T2 family. Post-translationally, N-linked core structure at Asn-87 and Asn-101 contains xylose and fucose or consists of disaccharide (GlcNAc-GlcNAc). N-linked core structure at Asn-144 contains xylose.

The catalysed reaction is a ribonucleotidyl-ribonucleotide-RNA + H2O = a 3'-end 3'-phospho-ribonucleotide-RNA + a 5'-end dephospho-ribonucleoside-RNA + H(+). Self-incompatibility (SI) is the inherited ability of a flowering plant to prevent self-fertilization by discriminating between self and non-self pollen during pollination. In many species, self-incompatibility is controlled by the single, multiallelic locus S. The protein is Ribonuclease S-1 of Pyrus pyrifolia (Chinese pear).